Reading from the N-terminus, the 157-residue chain is Homeobox protein DBX2 (157 aa).

A DNA-binding region (homeobox) is located at residues 9-68; sequence GILRRAVFSEDQRKALEKMFQKQKYISKTDRKKLAINLGLKESQVKIWFQNRRMKWRNSK. The disordered stretch occupies residues 105-157; that stretch reads SQEQTSPRWKEKSPGNSERLTSTQPPPRANSSQSPLYLYPDHDTANKAVTSSD. Polar residues predominate over residues 118 to 139; that stretch reads PGNSERLTSTQPPPRANSSQSP.

This sequence belongs to the H2.0 homeobox family. In terms of tissue distribution, localized to the central nervous system during embryogenesis. It is found restricted to the rostro-caudal and dorso-ventral regions of the hindbrain. In the ventricular zone of the spinal cord, it localizes to the dorsal part of the basal plate. In the adult, it is detected in ovary.

The protein resides in the nucleus. Functionally, appears to perform a very early function in establishing the identity of a subset of cells that originate in the region of the ventricular zone in the developing spinal cord and in the hindbrain. This Gallus gallus (Chicken) protein is Homeobox protein DBX2 (DBX2).